We begin with the raw amino-acid sequence, 70 residues long: Sec-independent protein translocase protein TatA (70 aa).

The helical transmembrane segment at 1 to 21 threads the bilayer; it reads MFGLGGQELLLILLIILLLFG. The tract at residues 47 to 70 is disordered; sequence EDEFNKAMSDPPEKKEKESPSDKG. A compositionally biased stretch (basic and acidic residues) spans 57–70; sequence PPEKKEKESPSDKG.

This sequence belongs to the TatA/E family. In terms of assembly, forms a complex with TatC.

The protein localises to the cell inner membrane. Part of the twin-arginine translocation (Tat) system that transports large folded proteins containing a characteristic twin-arginine motif in their signal peptide across membranes. TatA could form the protein-conducting channel of the Tat system. This Prosthecochloris aestuarii (strain DSM 271 / SK 413) protein is Sec-independent protein translocase protein TatA.